The chain runs to 155 residues: Ribonuclease H (155 aa).

The region spanning 1 to 146 (MNALFAWTDG…ADELARAGMA (146 aa)) is the RNase H type-1 domain. Residues D9, E52, D74, and D138 each contribute to the Mg(2+) site.

Belongs to the RNase H family. Monomer. The cofactor is Mg(2+).

The protein resides in the cytoplasm. The catalysed reaction is Endonucleolytic cleavage to 5'-phosphomonoester.. Its function is as follows. Endonuclease that specifically degrades the RNA of RNA-DNA hybrids. This is Ribonuclease H from Paracoccus denitrificans (strain Pd 1222).